Consider the following 293-residue polypeptide: Protease HtpX homolog (293 aa).

2 helical membrane passes run isoleucine 4 to valine 24 and serine 40 to serine 60. Histidine 146 lines the Zn(2+) pocket. The active site involves glutamate 147. Histidine 150 is a Zn(2+) binding site. The next 2 membrane-spanning stretches (helical) occupy residues leucine 161–isoleucine 181 and phenylalanine 197–tryptophan 217. Residue glutamate 223 participates in Zn(2+) binding.

Belongs to the peptidase M48B family. It depends on Zn(2+) as a cofactor.

The protein localises to the cell inner membrane. This is Protease HtpX homolog from Bordetella petrii (strain ATCC BAA-461 / DSM 12804 / CCUG 43448).